Here is a 256-residue protein sequence, read N- to C-terminus: Protein RKD4 (256 aa).

The 87-residue stretch at 130 to 216 folds into the RWP-RK domain; the sequence is EKVTVKKKRN…MEEEVKNLEE (87 aa). Residues 190–224 adopt a coiled-coil conformation; the sequence is RKLKSLNSLIKNLKNVGMEEEVKNLEEHRFLIEQE.

The protein resides in the nucleus. Its function is as follows. Putative transcription factor. The protein is Protein RKD4 (RKD4) of Arabidopsis thaliana (Mouse-ear cress).